The primary structure comprises 473 residues: GTPase Der (473 aa).

EngA-type G domains are found at residues 3–167 (FTVA…GKDR) and 203–378 (LRVA…RVWN). GTP-binding positions include 9-16 (GRPNVGKS), 56-60 (DTAGL), 119-122 (NKSE), 209-216 (GRPNAGKS), 256-260 (DTAGM), and 321-324 (NKWD). In terms of domain architecture, KH-like spans 379–463 (KRISTARLNR…PIRIHFRSPD (85 aa)).

Belongs to the TRAFAC class TrmE-Era-EngA-EngB-Septin-like GTPase superfamily. EngA (Der) GTPase family. As to quaternary structure, associates with the 50S ribosomal subunit.

Functionally, GTPase that plays an essential role in the late steps of ribosome biogenesis. In Rhizobium etli (strain ATCC 51251 / DSM 11541 / JCM 21823 / NBRC 15573 / CFN 42), this protein is GTPase Der.